Reading from the N-terminus, the 512-residue chain is Serine--tRNA ligase, cytoplasmic (512 aa).

M1 carries the N-acetylmethionine modification. Residues R9–S61 form an interaction with tRNA region. At S241 the chain carries Phosphoserine. 2 residues coordinate L-serine: T271 and R302. Residues R302–E304 and V318–F321 each bind ATP. N6-acetyllysine is present on K323. Residue E325 coordinates L-serine. E391 to S394 is an ATP binding site. N427 serves as a coordination point for L-serine. Residues F470–A512 form a disordered region. Residues E479–P499 show a composition bias toward basic and acidic residues. Residues K482 to K494 carry the Nuclear localization signal motif. Positions N502–A512 are enriched in polar residues. S506 is subject to Phosphoserine.

Belongs to the class-II aminoacyl-tRNA synthetase family. Type-1 seryl-tRNA synthetase subfamily. Homodimer. The tRNA molecule may bind across the dimer. Interacts with SIRT2. Interacts with METTL6; interaction is required for the tRNA N(3)-methylcytidine methyltransferase activity of METTL6.

The protein resides in the cytoplasm. Its subcellular location is the nucleus. The enzyme catalyses tRNA(Ser) + L-serine + ATP = L-seryl-tRNA(Ser) + AMP + diphosphate + H(+). It catalyses the reaction tRNA(Sec) + L-serine + ATP = L-seryl-tRNA(Sec) + AMP + diphosphate + H(+). It participates in aminoacyl-tRNA biosynthesis; selenocysteinyl-tRNA(Sec) biosynthesis; L-seryl-tRNA(Sec) from L-serine and tRNA(Sec): step 1/1. In terms of biological role, catalyzes the attachment of serine to tRNA(Ser) in a two-step reaction: serine is first activated by ATP to form Ser-AMP and then transferred to the acceptor end of tRNA(Ser). Is probably also able to aminoacylate tRNA(Sec) with serine, to form the misacylated tRNA L-seryl-tRNA(Sec), which will be further converted into selenocysteinyl-tRNA(Sec). In the nucleus, binds to the VEGFA core promoter and prevents MYC binding and transcriptional activation by MYC. Recruits SIRT2 to the VEGFA promoter, promoting deacetylation of histone H4 at 'Lys-16' (H4K16). Thereby, inhibits the production of VEGFA and sprouting angiogenesis mediated by VEGFA. This Mus musculus (Mouse) protein is Serine--tRNA ligase, cytoplasmic (Sars1).